Reading from the N-terminus, the 892-residue chain is Protein BNI4 (892 aa).

Residues Ser-43 and Ser-133 each carry the phosphoserine modification. 2 disordered regions span residues 185–287 and 305–387; these read DFLS…EDTS and KPVI…QDTE. Basic and acidic residues predominate over residues 208–223; that stretch reads TILERDNNLPVKREEN. Polar residues-rich tracts occupy residues 224–236 and 270–280; these read TIINSETESTTHS and DSSAQRTTSAG. Ser-281 bears the Phosphoserine mark. The segment covering 309–335 has biased composition (polar residues); that stretch reads GNNSVTNEKNKMSSSSTFSMNIQTSLK. The span at 346-356 shows a compositional bias: low complexity; it reads SSSSIFNSFLK. A compositionally biased stretch (basic and acidic residues) spans 357-371; sequence GKIETSDSPRKEPMR. 2 positions are modified to phosphoserine: Ser-364 and Ser-394. Thr-410 is subject to Phosphothreonine. Phosphoserine is present on residues Ser-476, Ser-500, and Ser-503. Disordered stretches follow at residues 506 to 526, 618 to 644, and 685 to 734; these read RTRSTKSNKRSSMNSQRRSLT, SDEEKTEVERDVPKPREEPLKKDSERQ, and YATE…GDER. A Phosphoserine modification is found at Ser-618. The segment covering 624–643 has biased composition (basic and acidic residues); the sequence is EVERDVPKPREEPLKKDSER. Thr-703 carries the post-translational modification Phosphothreonine. Residues 707–719 are compositionally biased toward basic and acidic residues; sequence RNNKEDSYKERET. A phosphoserine mark is found at Ser-746 and Ser-825.

In terms of assembly, may interact with CHS3 and seems to be an adapter (along with SKT5) to link CHS3 to septins.

In Saccharomyces cerevisiae (strain ATCC 204508 / S288c) (Baker's yeast), this protein is Protein BNI4 (BNI4).